The chain runs to 129 residues: Small ribosomal subunit protein uS8 (129 aa).

This sequence belongs to the universal ribosomal protein uS8 family. As to quaternary structure, part of the 30S ribosomal subunit.

One of the primary rRNA binding proteins, it binds directly to 16S rRNA central domain where it helps coordinate assembly of the platform of the 30S subunit. The chain is Small ribosomal subunit protein uS8 from Archaeoglobus fulgidus (strain ATCC 49558 / DSM 4304 / JCM 9628 / NBRC 100126 / VC-16).